A 339-amino-acid chain; its full sequence is Alcohol dehydrogenase (339 aa).

Zn(2+) contacts are provided by Cys38, His61, Cys92, Cys95, Cys98, Cys106, and Cys148. NAD(+)-binding positions include 172–177 (GIGGLG), Asp195, Lys200, 260–262 (VGL), and Arg331.

The protein belongs to the zinc-containing alcohol dehydrogenase family. It depends on Zn(2+) as a cofactor.

The enzyme catalyses a primary alcohol + NAD(+) = an aldehyde + NADH + H(+). It carries out the reaction a secondary alcohol + NAD(+) = a ketone + NADH + H(+). With respect to regulation, the rate-limiting step is NADH release. Catabolite repression. Functionally, active with primary alcohols, including methanol. The protein is Alcohol dehydrogenase (adh) of Geobacillus stearothermophilus (Bacillus stearothermophilus).